We begin with the raw amino-acid sequence, 118 residues long: uncharacterized protein (118 aa).

A helical transmembrane segment spans residues 95-115 (IIINLVIILAMYAPEIIGKLL).

The protein belongs to the M.jannaschii MJ0023/MJ0349/MJ1072/MJ1074/MJ1107/MJECL16 family.

The protein localises to the membrane. This is an uncharacterized protein from Methanocaldococcus jannaschii (strain ATCC 43067 / DSM 2661 / JAL-1 / JCM 10045 / NBRC 100440) (Methanococcus jannaschii).